The following is a 180-amino-acid chain: Ribulose bisphosphate carboxylase small subunit, chloroplastic (180 aa).

A chloroplast-targeting transit peptide spans 1 to 56 (MASSIMSSAAVATRSNGAQASMVAPFTGLKSNASFPVSRKTNLDITSIASNGGRVR).

This sequence belongs to the RuBisCO small chain family. In terms of assembly, heterohexadecamer of 8 large and 8 small subunits.

The protein resides in the plastid. It localises to the chloroplast. Functionally, ruBisCO catalyzes two reactions: the carboxylation of D-ribulose 1,5-bisphosphate, the primary event in carbon dioxide fixation, as well as the oxidative fragmentation of the pentose substrate. Both reactions occur simultaneously and in competition at the same active site. Although the small subunit is not catalytic it is essential for maximal activity. In Stellaria longipes (Longstalk starwort), this protein is Ribulose bisphosphate carboxylase small subunit, chloroplastic.